Here is a 227-residue protein sequence, read N- to C-terminus: MAYPFQLGLQDATSPIMEELLHFHDHTLMIVFLISSLVLYIISLMLTTKLTHTSTMDAQEVETVWTILPAIILILIALPSLRILYMMDEINNPSLTVKTMGHQWYWSYEYTDYEDLNFDSYMIPTQELKLGELRLLEVDNRVVLPMEMTVRMLISSEDVLHSWAVPSLGLKTDAIPGRLNQTTLMAMRPGLYYGQCSEICGSNHSFMPIVLEMVPLSYFETWSAVMV.

The Mitochondrial intermembrane segment spans residues 1 to 14 (MAYPFQLGLQDATS). A helical membrane pass occupies residues 15–45 (PIMEELLHFHDHTLMIVFLISSLVLYIISLM). Topologically, residues 46–59 (LTTKLTHTSTMDAQ) are mitochondrial matrix. Residues 60–87 (EVETVWTILPAIILILIALPSLRILYMM) form a helical membrane-spanning segment. Over 88 to 227 (DEINNPSLTV…YFETWSAVMV (140 aa)) the chain is Mitochondrial intermembrane. Cu cation-binding residues include His161, Cys196, Glu198, Cys200, His204, and Met207. Residue Glu198 coordinates Mg(2+). The residue at position 218 (Tyr218) is a Phosphotyrosine.

This sequence belongs to the cytochrome c oxidase subunit 2 family. As to quaternary structure, component of the cytochrome c oxidase (complex IV, CIV), a multisubunit enzyme composed of 14 subunits. The complex is composed of a catalytic core of 3 subunits MT-CO1, MT-CO2 and MT-CO3, encoded in the mitochondrial DNA, and 11 supernumerary subunits COX4I, COX5A, COX5B, COX6A, COX6B, COX6C, COX7A, COX7B, COX7C, COX8 and NDUFA4, which are encoded in the nuclear genome. The complex exists as a monomer or a dimer and forms supercomplexes (SCs) in the inner mitochondrial membrane with NADH-ubiquinone oxidoreductase (complex I, CI) and ubiquinol-cytochrome c oxidoreductase (cytochrome b-c1 complex, complex III, CIII), resulting in different assemblies (supercomplex SCI(1)III(2)IV(1) and megacomplex MCI(2)III(2)IV(2)). Found in a complex with TMEM177, COA6, COX18, COX20, SCO1 and SCO2. Interacts with TMEM177 in a COX20-dependent manner. Interacts with COX20. Interacts with COX16. Cu cation serves as cofactor.

Its subcellular location is the mitochondrion inner membrane. The enzyme catalyses 4 Fe(II)-[cytochrome c] + O2 + 8 H(+)(in) = 4 Fe(III)-[cytochrome c] + 2 H2O + 4 H(+)(out). Its function is as follows. Component of the cytochrome c oxidase, the last enzyme in the mitochondrial electron transport chain which drives oxidative phosphorylation. The respiratory chain contains 3 multisubunit complexes succinate dehydrogenase (complex II, CII), ubiquinol-cytochrome c oxidoreductase (cytochrome b-c1 complex, complex III, CIII) and cytochrome c oxidase (complex IV, CIV), that cooperate to transfer electrons derived from NADH and succinate to molecular oxygen, creating an electrochemical gradient over the inner membrane that drives transmembrane transport and the ATP synthase. Cytochrome c oxidase is the component of the respiratory chain that catalyzes the reduction of oxygen to water. Electrons originating from reduced cytochrome c in the intermembrane space (IMS) are transferred via the dinuclear copper A center (CU(A)) of subunit 2 and heme A of subunit 1 to the active site in subunit 1, a binuclear center (BNC) formed by heme A3 and copper B (CU(B)). The BNC reduces molecular oxygen to 2 water molecules using 4 electrons from cytochrome c in the IMS and 4 protons from the mitochondrial matrix. The protein is Cytochrome c oxidase subunit 2 (MT-CO2) of Lycalopex culpaeus (Culpeo fox).